A 483-amino-acid chain; its full sequence is MHQLTLAEIARGLADKSFSSEELTGALLARIKQLDPQINSFISITDDLALAQARAADARRAAGETGVLLGAPIAHKDLFCTNGVRTSCGSKMLDNFKAPYDATVVAKLAEAGMVTLGKTNMDEFAMGSANESSHYGAVKNPWNLEHVPGGSSGGSAAAVAARLLPATTGTDTGGSIRQPAALTNLTGLKPTYGRVSRWGMIAYASSLDQGGPLARTAEDCALLLQGMAGFDAKDSTSIEEPVPDYSASLNASLQGLRIGLPKEYFGAGLDPRIADLVQASVKELEKLGAVVKEISLPNMQHAIPAYYVIAPAEASSNLSRFDGVRFGYRCEEPKDLTDLYKRSRGEGFGVEVQRRIMVGTYALSAGYYDAYYVKAQQIRRLIKNDFMAAFNDVDLILGPTTPNPAWKLGAKSSDPVAAYLEDVYTITANLAGLPGLSMPAGFVDGLPVGVQLLAPYFQEGRLLNVAHRYQQVTDWHTRAPNGF.

Residues lysine 76 and serine 151 each act as charge relay system in the active site. Serine 175 acts as the Acyl-ester intermediate in catalysis.

It belongs to the amidase family. GatA subfamily. As to quaternary structure, heterotrimer of A, B and C subunits.

The catalysed reaction is L-glutamyl-tRNA(Gln) + L-glutamine + ATP + H2O = L-glutaminyl-tRNA(Gln) + L-glutamate + ADP + phosphate + H(+). In terms of biological role, allows the formation of correctly charged Gln-tRNA(Gln) through the transamidation of misacylated Glu-tRNA(Gln) in organisms which lack glutaminyl-tRNA synthetase. The reaction takes place in the presence of glutamine and ATP through an activated gamma-phospho-Glu-tRNA(Gln). The polypeptide is Glutamyl-tRNA(Gln) amidotransferase subunit A (Pseudomonas putida (strain ATCC 700007 / DSM 6899 / JCM 31910 / BCRC 17059 / LMG 24140 / F1)).